A 61-amino-acid chain; its full sequence is SPbeta prophage-derived uncharacterized protein YotK (61 aa).

A coiled-coil region spans residues 7–57 (SIQTLLNKMDRQMKTVKEAIEEKDLQRAHRNLINLADNNEELMQEIRWVKK).

In Bacillus subtilis (strain 168), this protein is SPbeta prophage-derived uncharacterized protein YotK (yotK).